A 1221-amino-acid chain; its full sequence is MSQPPPPPPLPPPPPPPEAPQTSSSLAAAATPGGLSKRRDRRILSGSCPDPKCQARLFFPASGSVSIECTECGQRHEQQQLLGVEEVTDPDVVLHNLLRNALLGVTGAPKKNTELVKVMGLSNYHCKLLSPILARYGMDKQTGRAKLLRDMNQGELFDCALLGDRAFLIEPEHVNTVGYGKDRSGSLLYLHDTLEDIKRANKSQECLIPVHVDGDGHCLVHAVSRALVGRELFWHALRENLKQHFQQHLARYQALFHDFIDAAEWEDIINECDPLFVPPEGVPLGLRNIHIFGLANVLHRPIILLDSLSGMRSSGDYSATFLPGLIPAEKCTGRDGHLNKPICIAWSSSGRNHYIPLVGIKGAALPKLPMNLLPKAWGVPQDLIKKYIKLEEDGGCVIGGDRSLQDKYLLRLVAAMEEVFMDKHGIHPSLVADVHQYFYRRTGVIGVQPEEVTAAAKKAVMDNRLHKCLLCGALSELHVPPEWLAPGGKLYNLAKSTHGQLRPDKNYSFPLNNLVCSYDPVKDVLLPDYGLSNLTACNWCHGTSVRRVRGDGSIVYLDGDRTNSRSTGGKCGCGFKHFWEGKEYDNLPEAFPITLEWGGRVVRETVYWFQYESDPSLNSNVYDVAMKLVTKHFPGEFGSEILVQKVVHTILHQTAKKNPDDYTPVNIDGAHAQRIGDVQGQELESQLPTKIILTGQKTKTLHKEELNMSKTERTIQQNITEQASVMQKRKTEKLKQEQKGQPRTVSPSTIRDGPSSAPATPTKAPYSPTTSKEKKIRITTNDGRQSMVTLKSSTTFFELQESIAREFNIPPYLQCIRYGFPPKELMPPQAGMEKEPVPLQHGDRITIEILKGKAEGGPSTAAHSAHTVRQEEIAVTGKLSSKELQEQADKEMYSLCLLATLMGEDVWSYAKGLPHMFQQGGVFYNIMKKTMGMADGKHCTFPHLPGKTFVYNASEDRLELCVDAAGHFPIGPDVEDLVKEAVSQVRAEATTRSRESSPSHGLLKLGSGGVVKKKSEQLHNVTAFQGKGHSLGTASSNPHMDPRARETLAVRKHNTGTDFSNSSIKTEPPVFTAASSNSELIRIAPGVVTMRDGRQIDPDVVEAQRKKLQEMVSSIQASMDKHLRDQSTEQTPSDLSQRKVEAVSSSVRPGNLQTGLPESFSLTGGTENLNTETTDSRVADVLGAAFATRSKAQKENSMEEPEEMDSQDAETTNTTEPMDHS.

Over residues 1 to 19 (MSQPPPPPPLPPPPPPPEA) the composition is skewed to pro residues. The tract at residues 1–40 (MSQPPPPPPLPPPPPPPEAPQTSSSLAAAATPGGLSKRRD) is disordered. One can recognise an OTU domain in the interval 207-360 (LIPVHVDGDG…RNHYIPLVGI (154 aa)). Residue D215 is part of the active site. The Nucleophile role is filled by C218. Residue H353 is part of the active site. N6-acetyllysine is present on K407. 2 disordered regions span residues 724–778 (SVMQ…KIRI) and 988–1009 (EATT…GSGG). Phosphoserine is present on residues S746 and S756. The span at 754–770 (PSSAPATPTKAPYSPTT) shows a compositional bias: low complexity. A Phosphothreonine modification is found at T762. 4 positions are modified to phosphoserine: S767, S993, S997, and S1076. 2 disordered regions span residues 1117–1177 (ASMD…TDSR) and 1189–1221 (RSKA…MDHS). A compositionally biased stretch (polar residues) spans 1143–1156 (VSSSVRPGNLQTGL). Over residues 1162–1173 (LTGGTENLNTET) the composition is skewed to low complexity. Phosphoserine is present on residues S1197 and S1206. Residues 1198-1208 (MEEPEEMDSQD) show a composition bias toward acidic residues. The span at 1209 to 1221 (AETTNTTEPMDHS) shows a compositional bias: polar residues.

In terms of assembly, binds VCP and the ternary complex containing STX5A, NSFL1C and VCP. Phosphorylated at Ser-1206 by ATM or ATR following induction of covalent DNA-protein cross-links (DPCs). In terms of tissue distribution, widely expressed.

Its subcellular location is the nucleus. It is found in the cytoplasm. It localises to the endoplasmic reticulum. The protein localises to the golgi apparatus. The protein resides in the golgi stack. The catalysed reaction is Thiol-dependent hydrolysis of ester, thioester, amide, peptide and isopeptide bonds formed by the C-terminal Gly of ubiquitin (a 76-residue protein attached to proteins as an intracellular targeting signal).. Its function is as follows. Deubiquitinating enzyme involved in DNA repair and reassembly of the Golgi apparatus and the endoplasmic reticulum following mitosis. Necessary for VCP-mediated reassembly of Golgi stacks after mitosis. Plays a role in VCP-mediated formation of transitional endoplasmic reticulum (tER). Mediates dissociation of the ternary complex containing STX5A, NSFL1C and VCP. Also involved in DNA repair following phosphorylation by ATM or ATR: acts by catalyzing deubiquitination of SPRTN, thereby promoting SPRTN recruitment to chromatin and subsequent proteolytic cleavage of covalent DNA-protein cross-links (DPCs). Hydrolyzes 'Lys-11'- and 'Lys-48'-linked polyubiquitin chains. This chain is Deubiquitinating protein VCPIP1, found in Rattus norvegicus (Rat).